Reading from the N-terminus, the 270-residue chain is D-aminoacyl-tRNA deacylase (270 aa).

The protein belongs to the DtdA deacylase family. In terms of assembly, monomer. Zn(2+) is required as a cofactor.

The catalysed reaction is a D-aminoacyl-tRNA + H2O = a tRNA + a D-alpha-amino acid + H(+). It carries out the reaction glycyl-tRNA(Ala) + H2O = tRNA(Ala) + glycine + H(+). D-aminoacyl-tRNA deacylase with broad substrate specificity. By recycling D-aminoacyl-tRNA to D-amino acids and free tRNA molecules, this enzyme counteracts the toxicity associated with the formation of D-aminoacyl-tRNA entities in vivo. The chain is D-aminoacyl-tRNA deacylase from Pyrococcus furiosus (strain ATCC 43587 / DSM 3638 / JCM 8422 / Vc1).